Consider the following 126-residue polypeptide: Spermidine export protein MdtJ (126 aa).

Transmembrane regions (helical) follow at residues 1-21 (MMIY…GTLS), 32-52 (TGHI…ALAV), 55-75 (VALG…ITVF), and 82-102 (ESLS…IMLV). Positions 104–126 (SGTRKPKKPNSPNRNSGEHHATA) are disordered.

This sequence belongs to the drug/metabolite transporter (DMT) superfamily. Small multidrug resistance (SMR) (TC 2.A.7.1) family. MdtJ subfamily. Forms a complex with MdtI.

It is found in the cell inner membrane. Functionally, catalyzes the excretion of spermidine. This Yersinia enterocolitica serotype O:8 / biotype 1B (strain NCTC 13174 / 8081) protein is Spermidine export protein MdtJ.